Reading from the N-terminus, the 338-residue chain is Fructose-bisphosphate aldolase (338 aa).

2 residues coordinate substrate: Arg50 and Lys138. Glu179 serves as the catalytic Proton acceptor. The active-site Schiff-base intermediate with dihydroxyacetone-P is Lys221.

The protein belongs to the class I fructose-bisphosphate aldolase family.

The enzyme catalyses beta-D-fructose 1,6-bisphosphate = D-glyceraldehyde 3-phosphate + dihydroxyacetone phosphate. It functions in the pathway carbohydrate degradation; glycolysis; D-glyceraldehyde 3-phosphate and glycerone phosphate from D-glucose: step 4/4. The sequence is that of Fructose-bisphosphate aldolase from Encephalitozoon cuniculi (strain GB-M1) (Microsporidian parasite).